Reading from the N-terminus, the 466-residue chain is UPF0652 protein C16A11.03c (466 aa).

Belongs to the UPF0652 family.

It is found in the cytoplasm. The protein resides in the nucleus. This Schizosaccharomyces pombe (strain 972 / ATCC 24843) (Fission yeast) protein is UPF0652 protein C16A11.03c.